Consider the following 322-residue polypeptide: uncharacterized protein (322 aa).

A Radical SAM core domain is found at 26–267; it reads HFGHKVFKVA…CDQLEIIPPE (242 aa). Residues C42, C54, and C57 each coordinate [4Fe-4S] cluster.

It belongs to the radical SAM superfamily. The cofactor is [4Fe-4S] cluster.

This is an uncharacterized protein from Bacillus subtilis (strain 168).